The chain runs to 440 residues: NADH-quinone oxidoreductase subunit D (440 aa).

This sequence belongs to the complex I 49 kDa subunit family. NDH-1 is composed of 14 different subunits. Subunits NuoB, C, D, E, F, and G constitute the peripheral sector of the complex.

The protein localises to the cell membrane. It catalyses the reaction a quinone + NADH + 5 H(+)(in) = a quinol + NAD(+) + 4 H(+)(out). Its function is as follows. NDH-1 shuttles electrons from NADH, via FMN and iron-sulfur (Fe-S) centers, to quinones in the respiratory chain. The immediate electron acceptor for the enzyme in this species is believed to be a menaquinone. Couples the redox reaction to proton translocation (for every two electrons transferred, four hydrogen ions are translocated across the cytoplasmic membrane), and thus conserves the redox energy in a proton gradient. This is NADH-quinone oxidoreductase subunit D from Mycobacterium bovis (strain ATCC BAA-935 / AF2122/97).